Consider the following 42-residue polypeptide: Photosystem I reaction center subunit IX (42 aa).

A helical transmembrane segment spans residues 7 to 27; sequence FLSTAPVLIMALLTFTAGLLI.

The protein belongs to the PsaJ family.

It is found in the cellular thylakoid membrane. May help in the organization of the PsaE and PsaF subunits. This is Photosystem I reaction center subunit IX from Rippkaea orientalis (strain PCC 8801 / RF-1) (Cyanothece sp. (strain PCC 8801)).